The following is a 292-amino-acid chain: 4-hydroxy-tetrahydrodipicolinate synthase (292 aa).

Thr45 serves as a coordination point for pyruvate. The active-site Proton donor/acceptor is the Tyr133. Lys161 (schiff-base intermediate with substrate) is an active-site residue. Ile203 contacts pyruvate.

It belongs to the DapA family. Homodimer.

Its subcellular location is the cytoplasm. It carries out the reaction L-aspartate 4-semialdehyde + pyruvate = (2S,4S)-4-hydroxy-2,3,4,5-tetrahydrodipicolinate + H2O + H(+). It functions in the pathway amino-acid biosynthesis; L-lysine biosynthesis via DAP pathway; (S)-tetrahydrodipicolinate from L-aspartate: step 3/4. Catalyzes the condensation of (S)-aspartate-beta-semialdehyde [(S)-ASA] and pyruvate to 4-hydroxy-tetrahydrodipicolinate (HTPA). The polypeptide is 4-hydroxy-tetrahydrodipicolinate synthase (Pseudomonas aeruginosa (strain ATCC 15692 / DSM 22644 / CIP 104116 / JCM 14847 / LMG 12228 / 1C / PRS 101 / PAO1)).